A 367-amino-acid chain; its full sequence is MHKFTGVNAKFQQPALRNLSPVVVEREREEFVGFFPQIVRDLTEDGIGHPEVGDAVARLKEVLQYNAPGGKCNRGLTVVAAYRELSGPGQKDAESLRCALAVGWCIELFQAFFLVADDIMDQSLTRRGQLCWYKKEGVGLDAINDSFLLESSVYRVLKKYCRQRPYYVHLLELFLQTAYQTELGQMLDLITAPVSKVDLSHFSEERYKAIVKYKTAFYSFYLPVAAAMYMVGIDSKEEHENAKAILLEMGEYFQIQDDYLDCFGDPALTGKVGTDIQDNKCSWLVVQCLQRVTPEQRQLLEDNYGRKEPEKVAKVKELYEAVGMRAAFQQYEESSYRRLQELIEKHSNRLPKEIFLGLAQKIYKRQK.

Isopentenyl diphosphate is bound by residues lysine 71, arginine 74, and glutamine 110. 2 residues coordinate Mg(2+): aspartate 117 and aspartate 121. Arginine 126 contacts dimethylallyl diphosphate. Arginine 127 serves as a coordination point for isopentenyl diphosphate. Lysine 214, threonine 215, glutamine 254, lysine 271, and lysine 280 together coordinate dimethylallyl diphosphate.

It belongs to the FPP/GGPP synthase family. In terms of assembly, homodimer. Requires Mg(2+) as cofactor.

It localises to the cytoplasm. It catalyses the reaction isopentenyl diphosphate + dimethylallyl diphosphate = (2E)-geranyl diphosphate + diphosphate. The enzyme catalyses isopentenyl diphosphate + (2E)-geranyl diphosphate = (2E,6E)-farnesyl diphosphate + diphosphate. It participates in isoprenoid biosynthesis; farnesyl diphosphate biosynthesis; farnesyl diphosphate from geranyl diphosphate and isopentenyl diphosphate: step 1/1. It functions in the pathway isoprenoid biosynthesis; geranyl diphosphate biosynthesis; geranyl diphosphate from dimethylallyl diphosphate and isopentenyl diphosphate: step 1/1. Its function is as follows. Catalyzes the sequential condensation of isopentenyl pyrophosphate with the allylic pyrophosphates, dimethylallyl pyrophosphate, and then with the resultant geranylpyrophosphate to the ultimate product farnesyl pyrophosphate. In Gallus gallus (Chicken), this protein is Farnesyl pyrophosphate synthase (FDPS).